We begin with the raw amino-acid sequence, 138 residues long: Sec-independent protein translocase protein TatB (138 aa).

The helical transmembrane segment at 2–18 threads the bilayer; the sequence is SFGEIIVILVVAILVLG. Positions 109–138 are disordered; sequence NNLSGQNLNTEEKPNLSKLETQDKNGKINV. The span at 118–138 shows a compositional bias: basic and acidic residues; it reads TEEKPNLSKLETQDKNGKINV.

It belongs to the TatB family. In terms of assembly, the Tat system comprises two distinct complexes: a TatABC complex, containing multiple copies of TatA, TatB and TatC subunits, and a separate TatA complex, containing only TatA subunits. Substrates initially bind to the TatABC complex, which probably triggers association of the separate TatA complex to form the active translocon.

The protein localises to the cell inner membrane. Its function is as follows. Part of the twin-arginine translocation (Tat) system that transports large folded proteins containing a characteristic twin-arginine motif in their signal peptide across membranes. Together with TatC, TatB is part of a receptor directly interacting with Tat signal peptides. TatB may form an oligomeric binding site that transiently accommodates folded Tat precursor proteins before their translocation. The sequence is that of Sec-independent protein translocase protein TatB from Campylobacter jejuni subsp. jejuni serotype O:2 (strain ATCC 700819 / NCTC 11168).